The chain runs to 221 residues: uncharacterized protein (221 aa).

Residues 1–30 (MAKFNNNILLIILIIVILFIIFYFLNKNNQ) form the signal peptide.

It is found in the virion. This is an uncharacterized protein from Acanthamoeba polyphaga mimivirus (APMV).